The chain runs to 273 residues: Bis(5'-nucleosyl)-tetraphosphatase, symmetrical (273 aa).

Belongs to the Ap4A hydrolase family.

The catalysed reaction is P(1),P(4)-bis(5'-adenosyl) tetraphosphate + H2O = 2 ADP + 2 H(+). Hydrolyzes diadenosine 5',5'''-P1,P4-tetraphosphate to yield ADP. The polypeptide is Bis(5'-nucleosyl)-tetraphosphatase, symmetrical (Histophilus somni (strain 2336) (Haemophilus somnus)).